The chain runs to 117 residues: Large ribosomal subunit protein bL19 (117 aa).

It belongs to the bacterial ribosomal protein bL19 family.

Its function is as follows. This protein is located at the 30S-50S ribosomal subunit interface and may play a role in the structure and function of the aminoacyl-tRNA binding site. This Aliivibrio fischeri (strain ATCC 700601 / ES114) (Vibrio fischeri) protein is Large ribosomal subunit protein bL19.